A 259-amino-acid polypeptide reads, in one-letter code: Envelope biogenesis factor ElyC (259 aa).

2 consecutive transmembrane segments (helical) span residues 12-32 (MLLP…LLWF) and 39-59 (GKIF…QPVA).

It localises to the cell inner membrane. Functionally, plays a critical role in the metabolism of the essential lipid carrier used for cell wall synthesis. The protein is Envelope biogenesis factor ElyC (elyC) of Escherichia coli O157:H7.